The primary structure comprises 29 residues: Pyridoxal 5'-phosphate synthase subunit PdxS (29 aa).

It belongs to the PdxS/SNZ family. In the presence of PdxT, forms a dodecamer of heterodimers.

It catalyses the reaction aldehydo-D-ribose 5-phosphate + D-glyceraldehyde 3-phosphate + L-glutamine = pyridoxal 5'-phosphate + L-glutamate + phosphate + 3 H2O + H(+). It participates in cofactor biosynthesis; pyridoxal 5'-phosphate biosynthesis. Its function is as follows. Catalyzes the formation of pyridoxal 5'-phosphate from ribose 5-phosphate (RBP), glyceraldehyde 3-phosphate (G3P) and ammonia. The ammonia is provided by the PdxT subunit. Can also use ribulose 5-phosphate and dihydroxyacetone phosphate as substrates, resulting from enzyme-catalyzed isomerization of RBP and G3P, respectively. The sequence is that of Pyridoxal 5'-phosphate synthase subunit PdxS from Clostridium pasteurianum.